A 365-amino-acid polypeptide reads, in one-letter code: D-alanine--D-alanine ligase (365 aa).

One can recognise an ATP-grasp domain in the interval 135–345 (KLLLKSFNIP…YGSLVDKLIA (211 aa)). Residue 168-223 (KQSLDYPVIVKPAMLGSSIGISIAYNETQIEKCIEEAFAYDLTVVIEKFMRAREIE) participates in ATP binding. Mg(2+) contacts are provided by D298, E312, and N314.

Belongs to the D-alanine--D-alanine ligase family. Requires Mg(2+) as cofactor. The cofactor is Mn(2+).

The protein resides in the cytoplasm. It catalyses the reaction 2 D-alanine + ATP = D-alanyl-D-alanine + ADP + phosphate + H(+). The protein operates within cell wall biogenesis; peptidoglycan biosynthesis. Its function is as follows. Cell wall formation. This chain is D-alanine--D-alanine ligase, found in Borrelia turicatae (strain 91E135).